The following is a 235-amino-acid chain: Homeobox-leucine zipper protein ATHB-12 (235 aa).

Residues 27–86 (KSNNQKRFSEEQIKSLELIFESETRLEPRKKVQVARELGLQPRQVAIWFQNKRARWKTKQ) constitute a DNA-binding region (homeobox). The tract at residues 87-122 (LEKEYNTLRANYNNLASQFEIMKKEKQSLVSELQRL) is leucine-zipper. Basic and acidic residues-rich tracts occupy residues 128–138 (RPKEEKHHECC) and 152–162 (HNGKSEPEGRL). The interval 128–167 (RPKEEKHHECCGDQGLALSSSTESHNGKSEPEGRLDQGSV) is disordered.

This sequence belongs to the HD-ZIP homeobox family. Class I subfamily. In terms of assembly, interacts with TFIIB1. As to expression, widely expressed.

It is found in the nucleus. Probable transcription activator that may act as growth regulators in response to water deficit. This is Homeobox-leucine zipper protein ATHB-12 (ATHB-12) from Arabidopsis thaliana (Mouse-ear cress).